The primary structure comprises 258 residues: Imidazole glycerol phosphate synthase subunit HisF (258 aa).

Residues aspartate 11 and aspartate 130 contribute to the active site.

This sequence belongs to the HisA/HisF family. In terms of assembly, heterodimer of HisH and HisF.

The protein resides in the cytoplasm. The enzyme catalyses 5-[(5-phospho-1-deoxy-D-ribulos-1-ylimino)methylamino]-1-(5-phospho-beta-D-ribosyl)imidazole-4-carboxamide + L-glutamine = D-erythro-1-(imidazol-4-yl)glycerol 3-phosphate + 5-amino-1-(5-phospho-beta-D-ribosyl)imidazole-4-carboxamide + L-glutamate + H(+). The protein operates within amino-acid biosynthesis; L-histidine biosynthesis; L-histidine from 5-phospho-alpha-D-ribose 1-diphosphate: step 5/9. Its function is as follows. IGPS catalyzes the conversion of PRFAR and glutamine to IGP, AICAR and glutamate. The HisF subunit catalyzes the cyclization activity that produces IGP and AICAR from PRFAR using the ammonia provided by the HisH subunit. This is Imidazole glycerol phosphate synthase subunit HisF from Shigella boydii serotype 18 (strain CDC 3083-94 / BS512).